Consider the following 156-residue polypeptide: Ribosomal RNA large subunit methyltransferase H (156 aa).

Residues Leu73, Gly104, and 123 to 128 (LGALTL) contribute to the S-adenosyl-L-methionine site.

Belongs to the RNA methyltransferase RlmH family. Homodimer.

The protein localises to the cytoplasm. The enzyme catalyses pseudouridine(1915) in 23S rRNA + S-adenosyl-L-methionine = N(3)-methylpseudouridine(1915) in 23S rRNA + S-adenosyl-L-homocysteine + H(+). In terms of biological role, specifically methylates the pseudouridine at position 1915 (m3Psi1915) in 23S rRNA. The protein is Ribosomal RNA large subunit methyltransferase H of Dichelobacter nodosus (strain VCS1703A).